A 195-amino-acid polypeptide reads, in one-letter code: MGSRASTLLRDEEIEEIKKETGFSHSQITRLYSRFTSLDKGENGTLSREDFQRIPELAINPLGDRIINAFFSEGEDQVNFRGFMRTLAHFRPIEDNEKSKDQNGPEPLNSRSNKLHFAFRLYDLDKDDKISRDELLQVLRMMVGVNISDEQLGSIADRTIQEADQDGDCAISFAEFVKVLEKVDVEQKMSIRFLH.

Gly2 is lipidated: N-myristoyl glycine. 4 EF-hand domains span residues 26-61 (SQIT…AINP), 66-101 (IINA…KSKD), 110-145 (SRSN…MVGV), and 151-186 (QLGS…VDVE). 9 residues coordinate Ca(2+): Asp123, Asp125, Asp127, Lys129, Glu134, Asp164, Asp166, Asp168, and Glu175.

The protein belongs to the calcineurin regulatory subunit family. CHP subfamily. Monomer. Post-translationally, phosphorylated. In terms of processing, calcium-binding or N-myristoylation are necessary for the Na(+)/H(+) exchange activities.

It is found in the nucleus. The protein resides in the cytoplasm. Its subcellular location is the cytoskeleton. The protein localises to the endomembrane system. It localises to the endoplasmic reticulum-Golgi intermediate compartment. It is found in the endoplasmic reticulum. The protein resides in the cell membrane. Its subcellular location is the membrane. Calcium-binding protein involved in different processes such as regulation of vesicular trafficking, plasma membrane Na(+)/H(+) exchanger and gene transcription. Involved in the constitutive exocytic membrane traffic. Mediates the association between microtubules and membrane-bound organelles of the endoplasmic reticulum and Golgi apparatus and is also required for the targeting and fusion of transcytotic vesicles (TCV) with the plasma membrane. Functions as an integral cofactor in cell pH regulation by controlling plasma membrane-type Na(+)/H(+) exchange activity. Inhibits serum- and GTPase-stimulated Na(+)/H(+) exchange. Plays a role as an inhibitor of ribosomal RNA transcription. Acts as a negative regulator of the calcineurin/NFAT signaling pathway. This chain is Calcineurin B homologous protein 1 (CHP1), found in Gallus gallus (Chicken).